Reading from the N-terminus, the 212-residue chain is Imidazole glycerol phosphate synthase subunit HisH (212 aa).

The Glutamine amidotransferase type-1 domain maps to 3–212 (DIAIVDYGMG…LGNFVRWKPV (210 aa)). Cys82 (nucleophile) is an active-site residue. Residues His191 and Glu193 contribute to the active site.

Heterodimer of HisH and HisF.

It is found in the cytoplasm. It catalyses the reaction 5-[(5-phospho-1-deoxy-D-ribulos-1-ylimino)methylamino]-1-(5-phospho-beta-D-ribosyl)imidazole-4-carboxamide + L-glutamine = D-erythro-1-(imidazol-4-yl)glycerol 3-phosphate + 5-amino-1-(5-phospho-beta-D-ribosyl)imidazole-4-carboxamide + L-glutamate + H(+). The catalysed reaction is L-glutamine + H2O = L-glutamate + NH4(+). Its pathway is amino-acid biosynthesis; L-histidine biosynthesis; L-histidine from 5-phospho-alpha-D-ribose 1-diphosphate: step 5/9. Its function is as follows. IGPS catalyzes the conversion of PRFAR and glutamine to IGP, AICAR and glutamate. The HisH subunit catalyzes the hydrolysis of glutamine to glutamate and ammonia as part of the synthesis of IGP and AICAR. The resulting ammonia molecule is channeled to the active site of HisF. This is Imidazole glycerol phosphate synthase subunit HisH from Nitrosospira multiformis (strain ATCC 25196 / NCIMB 11849 / C 71).